Here is a 120-residue protein sequence, read N- to C-terminus: Chaperonin GroEL (120 aa).

23-27 (DGTTT) lines the ATP pocket.

Belongs to the chaperonin (HSP60) family. As to quaternary structure, forms a cylinder of 14 subunits composed of two heptameric rings stacked back-to-back. Interacts with the co-chaperonin GroES.

It is found in the cytoplasm. The enzyme catalyses ATP + H2O + a folded polypeptide = ADP + phosphate + an unfolded polypeptide.. Its function is as follows. Together with its co-chaperonin GroES, plays an essential role in assisting protein folding. The GroEL-GroES system forms a nano-cage that allows encapsulation of the non-native substrate proteins and provides a physical environment optimized to promote and accelerate protein folding. The polypeptide is Chaperonin GroEL (Mycobacterium intracellulare).